Here is an 86-residue protein sequence, read N- to C-terminus: Small ribosomal subunit protein bS16 (86 aa).

It belongs to the bacterial ribosomal protein bS16 family.

This is Small ribosomal subunit protein bS16 from Leptothrix cholodnii (strain ATCC 51168 / LMG 8142 / SP-6) (Leptothrix discophora (strain SP-6)).